The primary structure comprises 333 residues: Ornithine carbamoyltransferase (333 aa).

Residues 56 to 59, Gln-83, Arg-107, and 134 to 137 each bind carbamoyl phosphate; these read STRT and HPTQ. Residues Asn-167, Asp-231, and 235 to 236 each bind L-ornithine; that span reads SM. Residues 273–274 and Arg-318 contribute to the carbamoyl phosphate site; that span reads CL.

Belongs to the aspartate/ornithine carbamoyltransferase superfamily. OTCase family.

It is found in the cytoplasm. It carries out the reaction carbamoyl phosphate + L-ornithine = L-citrulline + phosphate + H(+). The protein operates within amino-acid biosynthesis; L-arginine biosynthesis; L-arginine from L-ornithine and carbamoyl phosphate: step 1/3. Reversibly catalyzes the transfer of the carbamoyl group from carbamoyl phosphate (CP) to the N(epsilon) atom of ornithine (ORN) to produce L-citrulline. The chain is Ornithine carbamoyltransferase from Staphylococcus aureus (strain MSSA476).